The chain runs to 935 residues: Progesterone receptor (935 aa).

Positions 1 to 164 (MTELKAKGPR…PATQGVLSPL (164 aa)) are AF3; mediates transcriptional activation. The interval 1-254 (MTELKAKGPR…GGAAAGGGAA (254 aa)) is disordered. Residues 1–568 (MTELKAKGPR…YSFESLPQKI (568 aa)) form a modulating, Pro-Rich region. Serine 20 carries the post-translational modification Phosphoserine. The LXXL motif 1 motif lies at 55–59 (LDGLL). At serine 81 the chain carries Phosphoserine. Positions 115–119 (LDTLL) match the LXXL motif 2 motif. Residues serine 130 and serine 162 each carry the phosphoserine modification. Residues 165-305 (MSRSGGKAGD…LATTVMDFIH (141 aa)) form a mediates transcriptional transrepression region. Positions 183–187 (KVLPR) match the Nuclear localization signal motif. Residues serine 190 and serine 213 each carry the phosphoserine modification. Acidic residues predominate over residues 220 to 231 (EVEEEDGSESED). Over residues 232–246 (SAGPLLKGKPRALGG) the composition is skewed to low complexity. Serine 294 carries the phosphoserine; by MAPK1 modification. The tract at residues 331–378 (GGAGAASAFAPPRSSPSASSTPVAVGDFPDCAYPPDAEPKDDAYPLYS) is disordered. Low complexity predominate over residues 335–350 (AASAFAPPRSSPSASS). The residue at position 345 (serine 345) is a Phosphoserine; by MAPK. A Glycyl lysine isopeptide (Lys-Gly) (interchain with G-Cter in SUMO); alternate cross-link involves residue lysine 388. Lysine 388 participates in a covalent cross-link: Glycyl lysine isopeptide (Lys-Gly) (interchain with G-Cter in ubiquitin); alternate. Serine 400 is modified (phosphoserine; by CDK2). The span at 418-430 (PLGPPPPLPPRAP) shows a compositional bias: pro residues. The tract at residues 418–438 (PLGPPPPLPPRAPPTRAGEAA) is disordered. Residues 456-548 (STLECILYKA…VYPPYLNYLR (93 aa)) are AF1; mediates transcriptional activation. Lysine 533 participates in a covalent cross-link: Glycyl lysine isopeptide (Lys-Gly) (interchain with G-Cter in SUMO). 2 NR C4-type zinc fingers span residues 569-589 (CLIC…CGSC) and 605-629 (CAGR…LRKC). A DNA-binding region (nuclear receptor) is located at residues 569-641 (CLICGDEASG…AGMVLGGRKF (73 aa)). Serine 678 is subject to Phosphoserine. The NR LBD domain occupies 681–915 (QDIQLIPPLI…EFPEMMSEVI (235 aa)). The tract at residues 689–935 (LINLLMSIEP…MVKPLLFHKK (247 aa)) is AF2; mediates transcriptional activation.

The protein belongs to the nuclear hormone receptor family. Interacts with SMARD1 and UNC45A. Interacts with CUEDC2; the interaction promotes ubiquitination, decreases sumoylation, and represses transcriptional activity. Interacts with PIAS3; the interaction promotes sumoylation of PR in a hormone-dependent manner, inhibits DNA-binding, and alters nuclear export. Interacts with SP1; the interaction requires ligand-induced phosphorylation on Ser-345 by ERK1/2-MAPK. Interacts with PRMT2. Interacts with NCOA2 and NCOA1. Interacts with KLF9. Interacts with GTF2B. Phosphorylated on multiple serine sites. Several of these sites are hormone-dependent. Phosphorylation on Ser-294 is highly hormone-dependent and modulates ubiquitination and sumoylation on Lys-388. Phosphorylation on Ser-102 and Ser-345 also requires induction by hormone. Basal phosphorylation on Ser-81, Ser-162, Ser-190 and Ser-400 is increased in response to progesterone and can be phosphorylated in vitro by the CDK2-A1 complex. Increased levels of phosphorylation on Ser-400 also in the presence of EGF, heregulin, IGF, PMA and FBS. Phosphorylation at this site by CDK2 is ligand-independent, and increases nuclear translocation and transcriptional activity. Phosphorylation at Ser-162 and Ser-294, but not at Ser-190, is impaired during the G(2)/M phase of the cell cycle. Phosphorylation on Ser-345 by ERK1/2 MAPK is required for interaction with SP1. In terms of processing, sumoylation is hormone-dependent and represses transcriptional activity. Sumoylation on all three sites is enhanced by PIAS3. Desumoylated by SENP1. Sumoylation on Lys-388, the main site of sumoylation, is repressed by ubiquitination on the same site, and modulated by phosphorylation at Ser-294. Post-translationally, ubiquitination is hormone-dependent and represses sumoylation on the same site. Promoted by MAPK-mediated phosphorylation on Ser-294. Palmitoylated by ZDHHC7 and ZDHHC21. Palmitoylation is required for plasma membrane targeting and for rapid intracellular signaling via ERK and AKT kinases and cAMP generation.

The protein localises to the nucleus. Its subcellular location is the cytoplasm. The steroid hormones and their receptors are involved in the regulation of eukaryotic gene expression and affect cellular proliferation and differentiation in target tissues. Transcriptional activator of several progesteron-dependent promoters in a variety of cell types. Involved in activation of SRC-dependent MAPK signaling on hormone stimulation. This is Progesterone receptor (PGR) from Pongo pygmaeus (Bornean orangutan).